We begin with the raw amino-acid sequence, 610 residues long: tRNA uridine 5-carboxymethylaminomethyl modification enzyme MnmG (610 aa).

Residue Gly-14–Gly-19 participates in FAD binding. Residue Gly-274 to Phe-288 coordinates NAD(+).

This sequence belongs to the MnmG family. In terms of assembly, homodimer. Heterotetramer of two MnmE and two MnmG subunits. FAD serves as cofactor.

The protein localises to the cytoplasm. In terms of biological role, NAD-binding protein involved in the addition of a carboxymethylaminomethyl (cmnm) group at the wobble position (U34) of certain tRNAs, forming tRNA-cmnm(5)s(2)U34. This Chlamydia trachomatis serovar L2b (strain UCH-1/proctitis) protein is tRNA uridine 5-carboxymethylaminomethyl modification enzyme MnmG.